Reading from the N-terminus, the 297-residue chain is Calponin-1 (297 aa).

A Calponin-homology (CH) domain is found at 28-131 (HQREQELREW…STLLALASMA (104 aa)). Calponin-like repeat units follow at residues 164 to 189 (IGLQ…RHLY), 204 to 229 (ISLQ…RQIF), and 243 to 268 (VSLQ…RQVY). T170 carries the post-translational modification Phosphothreonine; by ROCK2. S175 is subject to Phosphoserine; by ROCK2. 2 positions are modified to phosphothreonine; by ROCK2: T180 and T184. A Phosphothreonine; by ROCK2 modification is found at T259.

Belongs to the calponin family.

Its function is as follows. Thin filament-associated protein that is implicated in the regulation and modulation of smooth muscle contraction. It is capable of binding to actin, calmodulin and tropomyosin. The interaction of calponin with actin inhibits the actomyosin Mg-ATPase activity. This Bos taurus (Bovine) protein is Calponin-1 (CNN1).